Reading from the N-terminus, the 201-residue chain is Small ribosomal subunit protein uS4 (201 aa).

One can recognise an S4 RNA-binding domain in the interval 91–151; sequence SRLDNVVYRA…EKSQKMNWFE (61 aa).

The protein belongs to the universal ribosomal protein uS4 family. As to quaternary structure, part of the 30S ribosomal subunit. Contacts protein S5. The interaction surface between S4 and S5 is involved in control of translational fidelity.

One of the primary rRNA binding proteins, it binds directly to 16S rRNA where it nucleates assembly of the body of the 30S subunit. Functionally, with S5 and S12 plays an important role in translational accuracy. The protein is Small ribosomal subunit protein uS4 of Corynebacterium glutamicum (strain ATCC 13032 / DSM 20300 / JCM 1318 / BCRC 11384 / CCUG 27702 / LMG 3730 / NBRC 12168 / NCIMB 10025 / NRRL B-2784 / 534).